The following is a 314-amino-acid chain: tRNA-cytidine(32) 2-sulfurtransferase (314 aa).

The PP-loop motif signature appears at 39-44 (SGGKDS). 3 residues coordinate [4Fe-4S] cluster: Cys114, Cys117, and Cys205.

It belongs to the TtcA family. As to quaternary structure, homodimer. Requires Mg(2+) as cofactor. [4Fe-4S] cluster serves as cofactor.

The protein resides in the cytoplasm. The enzyme catalyses cytidine(32) in tRNA + S-sulfanyl-L-cysteinyl-[cysteine desulfurase] + AH2 + ATP = 2-thiocytidine(32) in tRNA + L-cysteinyl-[cysteine desulfurase] + A + AMP + diphosphate + H(+). Its pathway is tRNA modification. In terms of biological role, catalyzes the ATP-dependent 2-thiolation of cytidine in position 32 of tRNA, to form 2-thiocytidine (s(2)C32). The sulfur atoms are provided by the cysteine/cysteine desulfurase (IscS) system. The sequence is that of tRNA-cytidine(32) 2-sulfurtransferase from Cupriavidus necator (strain ATCC 17699 / DSM 428 / KCTC 22496 / NCIMB 10442 / H16 / Stanier 337) (Ralstonia eutropha).